We begin with the raw amino-acid sequence, 109 residues long: UPF0235 protein MA_4097 (109 aa).

This sequence belongs to the UPF0235 family.

The protein is UPF0235 protein MA_4097 of Methanosarcina acetivorans (strain ATCC 35395 / DSM 2834 / JCM 12185 / C2A).